Consider the following 85-residue polypeptide: Fungal defensin triintsin (85 aa).

An N-terminal signal peptide occupies residues 1 to 21 (MQFTKLATVLIVSLMGSAAIA). Positions 22 to 47 (APSVDNAPAVAAEEVAAAPAENLEKR) are excised as a propeptide. 3 disulfide bridges follow: Cys-51/Cys-72, Cys-58/Cys-80, and Cys-62/Cys-82.

This sequence belongs to the invertebrate defensin family. In terms of processing, disulfide bonds are essential for antimicrobial activity.

Its subcellular location is the secreted. Antimicrobial peptide with broad-spectrum activity against Gram-positive bacteria, Gram-negative bacteria, and fungi. Also inhibits clinical isolates, including methicillin-resistant S.aureus (MRSA) (MIC=32 uM), K.pneumoniae, C.albicans and C.parapsilosis. Displays minimal inhibitory concentration (MIC) values similar to minimal bactericidal concentrations (MBC), suggesting a disruptive mechanism mode of action associated with membrane lysis. In vitro, shows hemolytic activity against human red blood cells. This is Fungal defensin triintsin from Trichophyton interdigitale (strain MR816).